The following is a 716-amino-acid chain: Fatty acid oxidation complex subunit alpha (716 aa).

The tract at residues 1–188 (MIYQSPTIQV…KVGAIDAVVA (188 aa)) is enoyl-CoA hydratase/isomerase. Asp295 provides a ligand contact to substrate. The segment at 310-716 (KDIKHAAVLG…SNNGSYYPKA (407 aa)) is 3-hydroxyacyl-CoA dehydrogenase. Residues Met323, Asp342, 399 to 401 (VVE), Lys406, and Ser428 contribute to the NAD(+) site. The active-site For 3-hydroxyacyl-CoA dehydrogenase activity is the His449. Residue Asn452 coordinates NAD(+). Residues Asn499 and Tyr659 each coordinate substrate.

The protein in the N-terminal section; belongs to the enoyl-CoA hydratase/isomerase family. It in the C-terminal section; belongs to the 3-hydroxyacyl-CoA dehydrogenase family. As to quaternary structure, heterotetramer of two alpha chains (FadB) and two beta chains (FadA).

It carries out the reaction a (3S)-3-hydroxyacyl-CoA + NAD(+) = a 3-oxoacyl-CoA + NADH + H(+). It catalyses the reaction a (3S)-3-hydroxyacyl-CoA = a (2E)-enoyl-CoA + H2O. The enzyme catalyses a 4-saturated-(3S)-3-hydroxyacyl-CoA = a (3E)-enoyl-CoA + H2O. The catalysed reaction is (3S)-3-hydroxybutanoyl-CoA = (3R)-3-hydroxybutanoyl-CoA. It carries out the reaction a (3Z)-enoyl-CoA = a 4-saturated (2E)-enoyl-CoA. It catalyses the reaction a (3E)-enoyl-CoA = a 4-saturated (2E)-enoyl-CoA. It functions in the pathway lipid metabolism; fatty acid beta-oxidation. Involved in the aerobic and anaerobic degradation of long-chain fatty acids via beta-oxidation cycle. Catalyzes the formation of 3-oxoacyl-CoA from enoyl-CoA via L-3-hydroxyacyl-CoA. It can also use D-3-hydroxyacyl-CoA and cis-3-enoyl-CoA as substrate. This chain is Fatty acid oxidation complex subunit alpha, found in Shewanella amazonensis (strain ATCC BAA-1098 / SB2B).